Reading from the N-terminus, the 166-residue chain is Large ribosomal subunit protein uL10 (166 aa).

This sequence belongs to the universal ribosomal protein uL10 family. As to quaternary structure, part of the ribosomal stalk of the 50S ribosomal subunit. The N-terminus interacts with L11 and the large rRNA to form the base of the stalk. The C-terminus forms an elongated spine to which L12 dimers bind in a sequential fashion forming a multimeric L10(L12)X complex.

Functionally, forms part of the ribosomal stalk, playing a central role in the interaction of the ribosome with GTP-bound translation factors. The polypeptide is Large ribosomal subunit protein uL10 (Tropheryma whipplei (strain TW08/27) (Whipple's bacillus)).